The chain runs to 940 residues: Glutamate receptor 2.9 (940 aa).

Positions 1–23 (MKTNNTFLSYFVCGFLLMGVGLG) are cleaved as a signal peptide. Over 24–566 (QNQTSEIKVG…DTWVFLEPWS (543 aa)) the chain is Extracellular. Residues asparagine 25, asparagine 39, asparagine 115, asparagine 338, asparagine 345, and asparagine 528 are each glycosylated (N-linked (GlcNAc...) asparagine). A helical transmembrane segment spans residues 567–587 (LELWVTTGCFFVFIGFVVWLF). Residues 588 to 596 (EHRVNTDFR) are Cytoplasmic-facing. The chain crosses the membrane as a helical span at residues 597-617 (GPPQYQIGTSLWFSFSTMVFA). Residues 618–628 (HRENVVSNLAR) lie on the Cytoplasmic side of the membrane. A helical membrane pass occupies residues 629-649 (FVVVVWCFVVLVLTQSYTASL). Residues 650–811 (TSFLTVQSLQ…NRLNLSSFLG (162 aa)) lie on the Extracellular side of the membrane. Asparagine 771, asparagine 776, and asparagine 805 each carry an N-linked (GlcNAc...) asparagine glycan. Residues 812–832 (LFLIAGTAISFSLLVFVALFL) traverse the membrane as a helical segment. At 833–940 (YEHRHTLGDD…ESDIECRVEQ (108 aa)) the chain is on the cytoplasmic side. Disordered stretches follow at residues 876–900 (ISSP…QSPS) and 914–940 (PSEE…RVEQ).

This sequence belongs to the glutamate-gated ion channel (TC 1.A.10.1) family. May form heteromers. As to expression, expressed predominantly in roots.

It localises to the membrane. In terms of biological role, glutamate-gated receptor that probably acts as a non-selective cation channel. May be involved in light-signal transduction and calcium homeostasis via the regulation of calcium influx into cells. The protein is Glutamate receptor 2.9 (GLR2.9) of Arabidopsis thaliana (Mouse-ear cress).